The sequence spans 183 residues: Translation initiation factor IF-3 (183 aa).

Residues 1-13 show a composition bias toward polar residues; sequence MKQPDRNQQQGAK. Residues 1 to 21 form a disordered region; it reads MKQPDRNQQQGAKSNRPAIND.

This sequence belongs to the IF-3 family. Monomer.

It is found in the cytoplasm. In terms of biological role, IF-3 binds to the 30S ribosomal subunit and shifts the equilibrium between 70S ribosomes and their 50S and 30S subunits in favor of the free subunits, thus enhancing the availability of 30S subunits on which protein synthesis initiation begins. The chain is Translation initiation factor IF-3 from Acinetobacter baumannii (strain AYE).